We begin with the raw amino-acid sequence, 411 residues long: Bifunctional protein GlmU (411 aa).

A pyrophosphorylase region spans residues Met1–Asn204. Residues Leu6–Gly9, Gln74, and Gly79 contribute to the UTP site. Positions 80, 130, 142, and 158 each coordinate N-acetyl-alpha-D-glucosamine 1-phosphate. Residues Gly205 to Leu224 form a linker region. Residues Asn225–Asn411 form an N-acetyltransferase region. His308 acts as the Proton acceptor in catalysis. Ala384 and Lys401 together coordinate acetyl-CoA.

It in the N-terminal section; belongs to the N-acetylglucosamine-1-phosphate uridyltransferase family. In the C-terminal section; belongs to the transferase hexapeptide repeat family.

The catalysed reaction is N-acetyl-alpha-D-glucosamine 1-phosphate + UTP + H(+) = UDP-N-acetyl-alpha-D-glucosamine + diphosphate. It carries out the reaction alpha-D-glucosamine 1-phosphate + acetyl-CoA = N-acetyl-alpha-D-glucosamine 1-phosphate + CoA + H(+). Its pathway is nucleotide-sugar biosynthesis; UDP-N-acetyl-alpha-D-glucosamine biosynthesis; N-acetyl-alpha-D-glucosamine 1-phosphate from alpha-D-glucosamine 6-phosphate (route II): step 2/2. It participates in nucleotide-sugar biosynthesis; UDP-N-acetyl-alpha-D-glucosamine biosynthesis; UDP-N-acetyl-alpha-D-glucosamine from N-acetyl-alpha-D-glucosamine 1-phosphate: step 1/1. Functionally, catalyzes the last two sequential reactions in the de novo biosynthetic pathway for UDP-N-acetyl-glucosamine (UDP-GlcNAc). Responsible for the acetylation of GlcN-1-P to GlcNAc-1-P, and for the uridyl transfer from UTP to GlcNAc-1-P, to produce UDP-GlcNAc and pyrophosphate. The polypeptide is Bifunctional protein GlmU (Methanococcus maripaludis (strain C7 / ATCC BAA-1331)).